Reading from the N-terminus, the 460-residue chain is MVAVTGGRPPGLQDAPGAPPPAPAAEAVPSRPLARDATYGGRVYGGVGGGGCCLEFLDCVLRAMGVATPAEIMPPADFRWAARPMRRRRRGGSSSSSSSPRDREPRDGRIAANGASAAASLYTMRGNKGVNQDAMLVWENFCSKEDTIFCGVFDGHGPYGHLVSKRVRDLLPIKLSANLGRDGHKETSTNIVTSSMTEGGGTERMDRDTETPLGTEENGDYPEMFAALRTSLLRAFYVMDRDLKFHKTIDSVFSGTTAVTVIKQGHDLLIGNLGDSRAVLGTRDEYDQFFAVQLTVDLKPTIPSEAARIRERSGRIFSLPDEPDVARVWLPKYNMPGLAMARAFGDFCLKDYGLISMPDVSYHRITEKDEFVVLATDGVWDVLSNSEVVSIVSQAKSEASAARFVVESAQRAWRTRFPTSKIDDCAVVCLFLNTDARNKPPGSGIKDLANAIELGGGNLS.

Disordered regions lie at residues 1–30 and 83–111; these read MVAVTGGRPPGLQDAPGAPPPAPAAEAVPS and RPMRRRRRGGSSSSSSSPRDREPRDGRIA. Positions 100–109 are enriched in basic and acidic residues; the sequence is PRDREPRDGR. A PPM-type phosphatase domain is found at 118 to 432; that stretch reads AASLYTMRGN…DDCAVVCLFL (315 aa). Mn(2+) is bound by residues aspartate 154 and glycine 155. Residues 192-219 are disordered; the sequence is VTSSMTEGGGTERMDRDTETPLGTEENG. Positions 201 to 210 are enriched in basic and acidic residues; sequence GTERMDRDTE. The Mn(2+) site is built by aspartate 377 and aspartate 423.

The protein belongs to the PP2C family. Mg(2+) is required as a cofactor. The cofactor is Mn(2+).

It catalyses the reaction O-phospho-L-seryl-[protein] + H2O = L-seryl-[protein] + phosphate. The enzyme catalyses O-phospho-L-threonyl-[protein] + H2O = L-threonyl-[protein] + phosphate. In Oryza sativa subsp. japonica (Rice), this protein is Probable protein phosphatase 2C 38.